Consider the following 700-residue polypeptide: Putative glutamine-dependent NAD(+) synthetase (700 aa).

A CN hydrolase domain is found at 5-275; it reads VTIASCQLNQ…VEVISATVDV (271 aa). Residue Glu45 is the Proton acceptor; for glutaminase activity of the active site. Residue Lys114 is the For glutaminase activity of the active site. The Nucleophile; for glutaminase activity role is filled by Cys175. Residues 327 to 700 form a ligase region; the sequence is IPLPEEEITF…ASKFEQHQRK (374 aa). 357-364 provides a ligand contact to ATP; it reads PLSGGLDS. Residue Ser359 is part of the active site.

In the C-terminal section; belongs to the NAD synthetase family.

It catalyses the reaction deamido-NAD(+) + L-glutamine + ATP + H2O = L-glutamate + AMP + diphosphate + NAD(+) + H(+). The protein operates within cofactor biosynthesis; NAD(+) biosynthesis; NAD(+) from deamido-NAD(+) (L-Gln route): step 1/1. This Schizosaccharomyces pombe (strain 972 / ATCC 24843) (Fission yeast) protein is Putative glutamine-dependent NAD(+) synthetase.